Here is a 354-residue protein sequence, read N- to C-terminus: MHQYQIHWVEHSEVKILSNIVVRLEYKERGVKSITNRRARHDAVSESKSIDYSGKKHIALVAGGMSAEREVSLVSSKGVSKALIALGYKVTFIDMGADIAFKLQEIKPDIVFNCLHGTYGEDGCLSGLLNIMRIPYTHSGVLSSALAFDKIYSRSWFLTNNINMAESIVVNKSDNIKIEPMKRPYVIKPITQGSSIGIEVIFEEDDFNFANYDFPYGDQVIIEKYIKGRELQVAVLNGKALGVLEIKLLKNRFYDYETKYTEGFAEHLCPAPIPTNLYDKLLIESEKIYKTMNCKGPARVEFLLEDQTNKLYALEINTHPGMTPLSIVPEIAAYAGINFTNLIEEIIKAASFES.

One can recognise an ATP-grasp domain in the interval 154-348 (RSWFLTNNIN…FTNLIEEIIK (195 aa)). Position 181-232 (181-232 (MKRPYVIKPITQGSSIGIEVIFEEDDFNFANYDFPYGDQVIIEKYIKGRELQ)) interacts with ATP. Glu301, Glu315, and Asn317 together coordinate Mg(2+).

The protein belongs to the D-alanine--D-alanine ligase family. The cofactor is Mg(2+). Requires Mn(2+) as cofactor.

It is found in the cytoplasm. It carries out the reaction 2 D-alanine + ATP = D-alanyl-D-alanine + ADP + phosphate + H(+). It participates in cell wall biogenesis; peptidoglycan biosynthesis. Its function is as follows. Cell wall formation. The protein is D-alanine--D-alanine ligase of Rickettsia canadensis (strain McKiel).